A 422-amino-acid polypeptide reads, in one-letter code: Tyrosine--tRNA ligase (422 aa).

Tyr-35 is a binding site for L-tyrosine. Positions 40 to 49 match the 'HIGH' region motif; it reads PTAPSLHVGH. L-tyrosine is bound by residues Tyr-170 and Gln-174. Positions 231-235 match the 'KMSKS' region motif; that stretch reads KFGKT. An ATP-binding site is contributed by Lys-234. In terms of domain architecture, S4 RNA-binding spans 353 to 419; that stretch reads APVVDLFAEV…GKKNLAAVEI (67 aa).

This sequence belongs to the class-I aminoacyl-tRNA synthetase family. TyrS type 1 subfamily. Homodimer.

The protein resides in the cytoplasm. The enzyme catalyses tRNA(Tyr) + L-tyrosine + ATP = L-tyrosyl-tRNA(Tyr) + AMP + diphosphate + H(+). Catalyzes the attachment of tyrosine to tRNA(Tyr) in a two-step reaction: tyrosine is first activated by ATP to form Tyr-AMP and then transferred to the acceptor end of tRNA(Tyr). This chain is Tyrosine--tRNA ligase, found in Streptomyces coelicolor (strain ATCC BAA-471 / A3(2) / M145).